The primary structure comprises 436 residues: Serine--tRNA ligase (436 aa).

Over residues 43–55 (TKSEQLKQKRNEV) the composition is skewed to basic and acidic residues. Positions 43–68 (TKSEQLKQKRNEVSDQIAQAKRNKED) are disordered. Residue 237 to 239 (TAE) coordinates L-serine. 268-270 (RSE) contacts ATP. Residue Glu291 participates in L-serine binding. Residue 355–358 (EISS) participates in ATP binding. Ser390 is an L-serine binding site.

The protein belongs to the class-II aminoacyl-tRNA synthetase family. Type-1 seryl-tRNA synthetase subfamily. As to quaternary structure, homodimer. The tRNA molecule binds across the dimer.

The protein resides in the cytoplasm. The enzyme catalyses tRNA(Ser) + L-serine + ATP = L-seryl-tRNA(Ser) + AMP + diphosphate + H(+). It carries out the reaction tRNA(Sec) + L-serine + ATP = L-seryl-tRNA(Sec) + AMP + diphosphate + H(+). It functions in the pathway aminoacyl-tRNA biosynthesis; selenocysteinyl-tRNA(Sec) biosynthesis; L-seryl-tRNA(Sec) from L-serine and tRNA(Sec): step 1/1. Its function is as follows. Catalyzes the attachment of serine to tRNA(Ser). Is also able to aminoacylate tRNA(Sec) with serine, to form the misacylated tRNA L-seryl-tRNA(Sec), which will be further converted into selenocysteinyl-tRNA(Sec). The sequence is that of Serine--tRNA ligase from Lactobacillus johnsonii (strain CNCM I-12250 / La1 / NCC 533).